Reading from the N-terminus, the 198-residue chain is Threonylcarbamoyl-AMP synthase (198 aa).

The YrdC-like domain occupies 15 to 198 (LLKIYHIIKL…AISGQLIRRG (184 aa)).

It belongs to the SUA5 family. TsaC subfamily.

It is found in the cytoplasm. It carries out the reaction L-threonine + hydrogencarbonate + ATP = L-threonylcarbamoyladenylate + diphosphate + H2O. Its function is as follows. Required for the formation of a threonylcarbamoyl group on adenosine at position 37 (t(6)A37) in tRNAs that read codons beginning with adenine. Catalyzes the conversion of L-threonine, HCO(3)(-)/CO(2) and ATP to give threonylcarbamoyl-AMP (TC-AMP) as the acyladenylate intermediate, with the release of diphosphate. The chain is Threonylcarbamoyl-AMP synthase from Baumannia cicadellinicola subsp. Homalodisca coagulata.